Consider the following 608-residue polypeptide: MEFSKKTRELSIKKMQERTLDLLIIGGGITGAGVALQAAASGLETGLIEMQDFAEGTSSRSTKLVHGGLRYLKQFDVEVVSDTVSERAVVQQIAPHIPKSDPMLLPVYDEDGATFSLFRLKVAMDLYDLLAGVSNTPAANKVLSKDQVLERQPNLKKEGLVGGGVYLDFRNNDARLVIENIKRANQDGALIANHVKAEGFLFDESGKITGVVARDLLTDQVFEIKARLVINTTGPWSDKVRNLSNKGTQFSQMRPTKGVHLVVDSSKIKVSQPVYFDTGLGDGRMVFVLPRENKTYFGTTDTDYTGDLEHPKVTQEDVDYLLGIVNNRFPESNITIDDIESSWAGLRPLIAGNSASDYNGGNNGTISDESFDNLIATVESYLSKEKTREDVESAVSKLESSTSEKHLDPSAVSRGSSLDRDDNGLLTLAGGKITDYRKMAEGAMERVVDILKAEFDRSFKLINSKTYPVSGGELNPANVDSEIEAFAQLGVSRGLDSKEAHYLANLYGSNAPKVFALAHSLEQAPGLSLADTLSLHYAMRNELTLSPVDFLLRRTNHMLFMRDSLDSIVEPILDEMGRFYDWTEEEKATYRADVEAALANNDLAELKN.

Residue 21 to 49 coordinates FAD; sequence DLLIIGGGITGAGVALQAAASGLETGLIE. Positions 393–418 are disordered; the sequence is SAVSKLESSTSEKHLDPSAVSRGSSL.

Belongs to the FAD-dependent glycerol-3-phosphate dehydrogenase family. It depends on FAD as a cofactor.

Its subcellular location is the cell membrane. The enzyme catalyses sn-glycerol 3-phosphate + O2 = dihydroxyacetone phosphate + H2O2. It functions in the pathway membrane lipid metabolism; glycerophospholipid metabolism. The protein is Alpha-glycerophosphate oxidase (glpO) of Streptococcus pneumoniae serotype 4 (strain ATCC BAA-334 / TIGR4).